Consider the following 302-residue polypeptide: Cuticle collagen dpy-13 (302 aa).

Triple-helical region regions lie at residues Gly-106–Ala-135, Gly-154–Pro-210, and Gly-219–Pro-278. Residues Gln-108–Cys-284 form a disordered region. The segment covering Thr-144 to Pro-159 has biased composition (pro residues). Low complexity predominate over residues Pro-188 to Lys-197. Pro residues-rich tracts occupy residues Gln-247–Asp-257 and Gln-268–Thr-277.

This sequence belongs to the cuticular collagen family. In terms of assembly, collagen polypeptide chains are complexed within the cuticle by disulfide bonds and other types of covalent cross-links.

In terms of biological role, nematode cuticles are composed largely of collagen-like proteins. The cuticle functions both as an exoskeleton and as a barrier to protect the worm from its environment. Mutations in dpy-13 affects the body shape. The chain is Cuticle collagen dpy-13 (dpy-13) from Caenorhabditis elegans.